Reading from the N-terminus, the 424-residue chain is Histidine--tRNA ligase (424 aa).

This sequence belongs to the class-II aminoacyl-tRNA synthetase family. In terms of assembly, homodimer.

It localises to the cytoplasm. It catalyses the reaction tRNA(His) + L-histidine + ATP = L-histidyl-tRNA(His) + AMP + diphosphate + H(+). The sequence is that of Histidine--tRNA ligase from Shewanella woodyi (strain ATCC 51908 / MS32).